The following is a 253-amino-acid chain: DnaJ homolog subfamily C member 8 (253 aa).

Ala2 is subject to N-acetylalanine. Ser35 bears the Phosphoserine mark. Residues 57–124 (NPFEVLQIDP…QKKRALDVIQ (68 aa)) form the J domain. N6-acetyllysine is present on Lys146. The segment covering 181-222 (EAKEMHERKRQREEEIEAQEKAKREREWQKNFEESRDGRVDS) has biased composition (basic and acidic residues). A disordered region spans residues 181 to 253 (EAKEMHERKR…PPKVKMEQRE (73 aa)). 2 consecutive short sequence motifs (nuclear localization signal) follow at residues 189 to 192 (KRQR) and 203 to 206 (KRER). Ser222 bears the Phosphoserine mark. The span at 231-240 (KGKKEKKNRT) shows a compositional bias: basic residues. Positions 232-253 (GKKEKKNRTFLRPPKVKMEQRE) are essential for polyglutamine aggregation suppression.

In terms of assembly, interacts with SRPK1. Interacts with HSP70 (HSPA1A or HSPA1B).

Its subcellular location is the nucleus. Functionally, suppresses polyglutamine (polyQ) aggregation of ATXN3 in neuronal cells. In Mus musculus (Mouse), this protein is DnaJ homolog subfamily C member 8 (Dnajc8).